A 335-amino-acid chain; its full sequence is MVIKFGYKASAEQFGPRELVELGVLAEAHGMDSATVSDHFQPWRHEGGHAPFSLAWMTAVGERTSRLQLGTSVMTPTFRYNPAVVAQAFATMGCLYPGRIMLGVGTGEALNEIATGFAGEWPEFKERFARLREAVALMRELWLGDRVDFEGNYYKTVGASIYDVPEGGIPVYIAAGGPVVARYAGRSGDGFICTSGKGMELYTEKLMPAVAEGAEKADRDVAEIDKMIEIKISYDTDPELALENTRFWAPLSLTPEQKHSIDDPIEMERAADALPIEQVAKRWIVASDPDEAVAQIRPYLDAGLNHLVFHAPGHDQKRFLELFQRDLAPRLRGLA.

Asp-38 contacts coenzyme F420-(gamma-Glu)n. The active-site Proton donor is the His-39. Coenzyme F420-(gamma-Glu)n contacts are provided by residues Thr-75 and 106-107; that span reads TG. The active-site Proton acceptor is the Glu-108. Coenzyme F420-(gamma-Glu)n is bound by residues Asn-111, 176 to 177, and 179 to 180; these read GG and VV. Substrate is bound by residues Thr-194, Lys-197, Lys-258, and Arg-282.

The protein belongs to the F420-dependent glucose-6-phosphate dehydrogenase family. In terms of assembly, homodimer.

It catalyses the reaction oxidized coenzyme F420-(gamma-L-Glu)(n) + D-glucose 6-phosphate + H(+) = 6-phospho-D-glucono-1,5-lactone + reduced coenzyme F420-(gamma-L-Glu)(n). In terms of biological role, catalyzes the coenzyme F420-dependent oxidation of glucose 6-phosphate (G6P) to 6-phosphogluconolactone. The sequence is that of F420-dependent glucose-6-phosphate dehydrogenase 1 from Rhodococcus jostii (strain RHA1).